Here is a 478-residue protein sequence, read N- to C-terminus: UDP-N-acetylmuramate--L-alanine ligase (478 aa).

126–132 (GTHGKTT) lines the ATP pocket.

The protein belongs to the MurCDEF family.

Its subcellular location is the cytoplasm. The catalysed reaction is UDP-N-acetyl-alpha-D-muramate + L-alanine + ATP = UDP-N-acetyl-alpha-D-muramoyl-L-alanine + ADP + phosphate + H(+). Its pathway is cell wall biogenesis; peptidoglycan biosynthesis. Its function is as follows. Cell wall formation. This Mycolicibacterium vanbaalenii (strain DSM 7251 / JCM 13017 / BCRC 16820 / KCTC 9966 / NRRL B-24157 / PYR-1) (Mycobacterium vanbaalenii) protein is UDP-N-acetylmuramate--L-alanine ligase.